The following is a 99-amino-acid chain: Large ribosomal subunit protein bL27 (99 aa).

Positions 1-9 are excised as a propeptide; it reads MLIMNLQLF.

This sequence belongs to the bacterial ribosomal protein bL27 family. In terms of processing, the N-terminus is cleaved by ribosomal processing cysteine protease Prp.

This is Large ribosomal subunit protein bL27 from Clostridium botulinum (strain Eklund 17B / Type B).